The following is a 388-amino-acid chain: tRNA (guanine(26)-N(2))-dimethyltransferase (388 aa).

In terms of domain architecture, Trm1 methyltransferase spans 4 to 383; that stretch reads KTIVEGTTKV…APITEIKEII (380 aa). Positions 41, 78, 94, and 123 each coordinate S-adenosyl-L-methionine. 4 residues coordinate Zn(2+): cysteine 251, cysteine 254, cysteine 271, and cysteine 274.

This sequence belongs to the class I-like SAM-binding methyltransferase superfamily. Trm1 family.

The enzyme catalyses guanosine(26) in tRNA + 2 S-adenosyl-L-methionine = N(2)-dimethylguanosine(26) in tRNA + 2 S-adenosyl-L-homocysteine + 2 H(+). In terms of biological role, dimethylates a single guanine residue at position 26 of a number of tRNAs using S-adenosyl-L-methionine as donor of the methyl groups. The chain is tRNA (guanine(26)-N(2))-dimethyltransferase from Methanosarcina barkeri (strain Fusaro / DSM 804).